The chain runs to 79 residues: Putative sulfur carrier protein TM_0983 (79 aa).

C17 acts as the Cysteine persulfide intermediate in catalysis.

This sequence belongs to the sulfur carrier protein TusA family.

The polypeptide is Putative sulfur carrier protein TM_0983 (Thermotoga maritima (strain ATCC 43589 / DSM 3109 / JCM 10099 / NBRC 100826 / MSB8)).